The following is a 452-amino-acid chain: Lysine-rich nucleolar protein 1 (452 aa).

3 disordered regions span residues 1-28, 55-161, and 184-305; these read MITK…VKEP, VIQE…AFSG, and REQA…PDTD. A Glycyl lysine isopeptide (Lys-Gly) (interchain with G-Cter in SUMO2) cross-link involves residue Lys7. The segment covering 65–75 has biased composition (basic residues); that stretch reads LVKKKKKKKGH. Over residues 78–98 the composition is skewed to basic and acidic residues; that stretch reads ICEEHLEPEITLRAGRTERSH. At Ser112 the chain carries Phosphoserine. Lys126 is covalently cross-linked (Glycyl lysine isopeptide (Lys-Gly) (interchain with G-Cter in SUMO2)). Residues 127–139 are compositionally biased toward basic and acidic residues; the sequence is TSPDPRQDEEVTR. Position 128 is a phosphoserine (Ser128). 2 stretches are compositionally biased toward basic residues: residues 140–151 and 258–267; these read VGKKLKKHKKEK and SVKKKVKSKK. Ser258 bears the Phosphoserine mark. Lys280 is covalently cross-linked (Glycyl lysine isopeptide (Lys-Gly) (interchain with G-Cter in SUMO2)). The segment covering 293 to 305 has biased composition (acidic residues); that stretch reads VAEEPWEEEPDTD. The segment at 300–452 is interaction with ZNF106; it reads EEPDTDLEVV…NASKSIKFED (153 aa). Position 304 is a phosphothreonine (Thr304). Residues Lys313, Lys347, Lys367, Lys369, and Lys401 each participate in a glycyl lysine isopeptide (Lys-Gly) (interchain with G-Cter in SUMO2) cross-link. An Omega-N-methylarginine modification is found at Arg424. A Glycyl lysine isopeptide (Lys-Gly) (interchain with G-Cter in SUMO2) cross-link involves residue Lys436.

In terms of assembly, interacts with ZNF106.

It is found in the nucleus. It localises to the nucleolus. This is Lysine-rich nucleolar protein 1 (KNOP1) from Bos taurus (Bovine).